Reading from the N-terminus, the 278-residue chain is Extracellular metalloprotease MCYG_03238 (278 aa).

Positions 1–19 (MRFSIVLSSIAALSSVAAA) are cleaved as a signal peptide. Asparagine 52 is a glycosylation site (N-linked (GlcNAc...) asparagine). Histidine 170 provides a ligand contact to Zn(2+). Glutamate 171 is a catalytic residue. Position 174 (histidine 174) interacts with Zn(2+). Cysteine 209 and cysteine 255 are oxidised to a cystine.

It belongs to the peptidase M43B family.

It is found in the secreted. Its function is as follows. Secreted metalloproteinase that allows assimilation of proteinaceous substrates. Plays a pivotal role as a pathogenicity determinant during infections and contributes to the ability of the pathogen to persist within the mammalian host. The polypeptide is Extracellular metalloprotease MCYG_03238 (Arthroderma otae (strain ATCC MYA-4605 / CBS 113480) (Microsporum canis)).